The sequence spans 589 residues: Kelch-like protein 25 (589 aa).

In terms of domain architecture, BTB spans 46 to 114 (TDVTLWAGDR…AYSSRIVINE (69 aa)). The 102-residue stretch at 149–250 (CLGMMVLSDA…LPSDCLKNAV (102 aa)) folds into the BACK domain. 6 Kelch repeats span residues 296-340 (TLLI…AIGC), 341-388 (KVYV…ELEN), 389-444 (CLYV…SAKL), 446-492 (LFVF…VLGS), 493-538 (QIFI…ASGN), and 539-585 (KLYV…STWK).

As to quaternary structure, component of the BCR(KLHL25) E3 ubiquitin ligase complex, at least composed of CUL3, KLHL25 and RBX1.

Its pathway is protein modification; protein ubiquitination. In terms of biological role, substrate-specific adapter of a BCR (BTB-CUL3-RBX1) E3 ubiquitin ligase complex involved in various processes, such as translation homeostasis and lipid synthesis. The BCR(KLHL25) ubiquitin ligase complex acts by mediating ubiquitination of hypophosphorylated EIF4EBP1 (4E-BP1): ubiquitination and subsequent degradation of hypophosphorylated EIF4EBP1 (4E-BP1) probably serves as a homeostatic mechanism to maintain translation and prevent eIF4E inhibition when eIF4E levels are low. The BCR(KLHL25) complex does not target EIF4EBP1 (4E-BP1) when it is hyperphosphorylated or associated with eIF4E. The BCR(KLHL25) complex also acts as a regulator of lipid synthesis by mediating ubiquitination and degradation of ACLY, thereby inhibiting lipid synthesis. BCR(KLHL25)-mediated degradation of ACLY promotes fatty acid oxidation and is required for differentiation of inducible regulatory T (iTreg) cells. The chain is Kelch-like protein 25 from Mus musculus (Mouse).